Reading from the N-terminus, the 206-residue chain is N-(5'-phosphoribosyl)anthranilate isomerase (206 aa).

This sequence belongs to the TrpF family.

The catalysed reaction is N-(5-phospho-beta-D-ribosyl)anthranilate = 1-(2-carboxyphenylamino)-1-deoxy-D-ribulose 5-phosphate. The protein operates within amino-acid biosynthesis; L-tryptophan biosynthesis; L-tryptophan from chorismate: step 3/5. The polypeptide is N-(5'-phosphoribosyl)anthranilate isomerase (Pseudomonas putida (strain ATCC 700007 / DSM 6899 / JCM 31910 / BCRC 17059 / LMG 24140 / F1)).